Here is a 112-residue protein sequence, read N- to C-terminus: Nitrogenase-stabilizing/protective protein NifW (112 aa).

It belongs to the NifW family. In terms of assembly, homotrimer; associates with NifD.

In terms of biological role, may protect the nitrogenase Fe-Mo protein from oxidative damage. The chain is Nitrogenase-stabilizing/protective protein NifW from Burkholderia vietnamiensis (strain G4 / LMG 22486) (Burkholderia cepacia (strain R1808)).